We begin with the raw amino-acid sequence, 197 residues long: RNA pyrophosphohydrolase (197 aa).

The region spanning glycine 6–serine 154 is the Nudix hydrolase domain. The short motif at glycine 38 to glycine 59 is the Nudix box element.

The protein belongs to the Nudix hydrolase family. RppH subfamily. Requires a divalent metal cation as cofactor.

Its function is as follows. Accelerates the degradation of transcripts by removing pyrophosphate from the 5'-end of triphosphorylated RNA, leading to a more labile monophosphorylated state that can stimulate subsequent ribonuclease cleavage. The chain is RNA pyrophosphohydrolase from Polynucleobacter necessarius subsp. necessarius (strain STIR1).